Reading from the N-terminus, the 370-residue chain is 2-oxoisovalerate dehydrogenase subunit beta, mitochondrial (370 aa).

A mitochondrion-targeting transit peptide spans Met1–Arg25. Tyr130 lines the thiamine diphosphate pocket. 4 residues coordinate K(+): Gly156, Leu158, Thr159, and Glu209.

In terms of assembly, heterotetramer of 2 alpha and 2 beta chains. Thiamine diphosphate serves as cofactor.

The protein resides in the mitochondrion matrix. It catalyses the reaction N(6)-[(R)-lipoyl]-L-lysyl-[protein] + 3-methyl-2-oxobutanoate + H(+) = N(6)-[(R)-S(8)-2-methylpropanoyldihydrolipoyl]-L-lysyl-[protein] + CO2. In terms of biological role, the branched-chain alpha-keto dehydrogenase complex catalyzes the overall conversion of alpha-keto acids to acyl-CoA and CO(2). It contains multiple copies of three enzymatic components: branched-chain alpha-keto acid decarboxylase (E1), lipoamide acyltransferase (E2) and lipoamide dehydrogenase (E3). This Dictyostelium discoideum (Social amoeba) protein is 2-oxoisovalerate dehydrogenase subunit beta, mitochondrial (bkdB).